The following is a 359-amino-acid chain: DNA ligase (359 aa).

Residues 32-35 (EIKY), Arg39, 55-57 (RVS), and Glu93 each bind ATP. Lys34 (N6-AMP-lysine intermediate) is an active-site residue. Glu217 lines the a divalent metal cation pocket. ATP-binding residues include Lys232 and Lys238.

The protein belongs to the ATP-dependent DNA ligase family. A divalent metal cation serves as cofactor.

The enzyme catalyses ATP + (deoxyribonucleotide)n-3'-hydroxyl + 5'-phospho-(deoxyribonucleotide)m = (deoxyribonucleotide)n+m + AMP + diphosphate.. Its function is as follows. DNA ligase that seals nicks in double-stranded DNA during DNA replication, DNA recombination and DNA repair in an ATP-dependent reaction. Binds specifically to DNA nicks containing a 3'-OH and a 5'-phosphate group. The chain is DNA ligase from Escherichia phage T7 (Bacteriophage T7).